Here is a 202-residue protein sequence, read N- to C-terminus: Protein G1-like4 (202 aa).

2 disordered regions span residues 1–44 (MDLS…RYEA) and 158–202 (RARG…GAAC). A compositionally biased stretch (gly residues) spans 12–22 (SGGGNGGGGGS). Positions 23 to 36 (SSSNSSPSMGAGAP) are enriched in low complexity. Positions 41-168 (RYEAQKRRDW…ARGVSYEKKK (128 aa)) constitute an ALOG domain. Residues 166–170 (KKKRK) carry the Nuclear localization signal motif. The segment covering 173 to 186 (QQQQLQGGDSSGLH) has biased composition (low complexity). Residues 192–202 (PPPPPPAGAAC) are compositionally biased toward pro residues.

It belongs to the plant homeotic and developmental regulators ALOG protein family.

It is found in the nucleus. Probable transcription regulator that acts as a developmental regulator by promoting cell growth in response to light. The chain is Protein G1-like4 from Oryza sativa subsp. indica (Rice).